Consider the following 668-residue polypeptide: L-type lectin-domain containing receptor kinase I.7 (668 aa).

A signal peptide spans 1–21 (MIRGLLLGIIWMIFCVCSSFQ). Topologically, residues 22–285 (QETPFVYNNF…SSTKKKSTSP (264 aa)) are extracellular. The tract at residues 24–256 (TPFVYNNFGH…YQYILGWSFS (233 aa)) is legume-lectin like. N-linked (GlcNAc...) asparagine glycans are attached at residues N56, N125, N167, N201, and N223. Residues 286-306 (VLSVLLGLIAFIVLGILVVAY) traverse the membrane as a helical segment. The Cytoplasmic portion of the chain corresponds to 307-668 (LYRRNLYSEV…THSVLYGSGR (362 aa)). The Protein kinase domain maps to 341-620 (FNRSEFLGRG…LNGNLALPEF (280 aa)). ATP contacts are provided by residues 347–355 (LGRGGFGEV) and K372. The Proton acceptor role is filled by D468.

This sequence in the C-terminal section; belongs to the protein kinase superfamily. Ser/Thr protein kinase family. It in the N-terminal section; belongs to the leguminous lectin family.

The protein localises to the cell membrane. The enzyme catalyses L-seryl-[protein] + ATP = O-phospho-L-seryl-[protein] + ADP + H(+). It catalyses the reaction L-threonyl-[protein] + ATP = O-phospho-L-threonyl-[protein] + ADP + H(+). Functionally, involved in resistance response to the pathogenic oomycetes Phytophthora infestans and Phytophthora capsici. The chain is L-type lectin-domain containing receptor kinase I.7 from Arabidopsis thaliana (Mouse-ear cress).